Consider the following 300-residue polypeptide: Ribosome-inactivating protein 3 (300 aa).

Glu-207 is an active-site residue.

This sequence belongs to the ribosome-inactivating protein family. Type 1 RIP subfamily. Monomer. Accumulates to high levels in seeds.

The protein resides in the cytoplasm. The enzyme catalyses Endohydrolysis of the N-glycosidic bond at one specific adenosine on the 28S rRNA.. Functionally, possesses features of some constitutive defense agent. The coordinate Opaque-2-controlled synthesis of this protein and the major seed storage proteins (zeins) may provide the germinating seedling with both nutritional benefits and protection against pathogen invasion of the surrounding endosperm. This is Ribosome-inactivating protein 3 (CRIP3) from Zea mays (Maize).